The sequence spans 218 residues: Glutathione S-transferase class-mu 26 kDa isozyme 51 (218 aa).

The 82-residue stretch at 2–83 folds into the GST N-terminal domain; sequence PAKLGYWKIR…YIADKHGMLG (82 aa). Residues 7 to 8, 41 to 45, 54 to 55, and 67 to 68 contribute to the glutathione site; these read YW, WFGDK, NL, and QS. Residues 85-203 form the GST C-terminal domain; it reads TPEERARISM…ESEKFIKWPL (119 aa). Tyrosine 111 provides a ligand contact to substrate.

Belongs to the GST superfamily. Mu family. Homodimer.

The protein localises to the cytoplasm. It catalyses the reaction RX + glutathione = an S-substituted glutathione + a halide anion + H(+). Functionally, conjugation of reduced glutathione to a wide number of exogenous and endogenous hydrophobic electrophiles. Its function is as follows. GST isoenzymes appear to play a central role in the parasite detoxification system. Other functions are also suspected including a role in increasing the solubility of haematin in the parasite gut. This is Glutathione S-transferase class-mu 26 kDa isozyme 51 from Fasciola hepatica (Liver fluke).